The sequence spans 95 residues: Co-chaperonin GroES (95 aa).

It belongs to the GroES chaperonin family. As to quaternary structure, heptamer of 7 subunits arranged in a ring. Interacts with the chaperonin GroEL.

It is found in the cytoplasm. In terms of biological role, together with the chaperonin GroEL, plays an essential role in assisting protein folding. The GroEL-GroES system forms a nano-cage that allows encapsulation of the non-native substrate proteins and provides a physical environment optimized to promote and accelerate protein folding. GroES binds to the apical surface of the GroEL ring, thereby capping the opening of the GroEL channel. The polypeptide is Co-chaperonin GroES (Vesicomyosocius okutanii subsp. Calyptogena okutanii (strain HA)).